A 317-amino-acid chain; its full sequence is NAC domain-containing protein 19 (317 aa).

Residues 14–162 form the NAC domain; that stretch reads LPPGFRFYPT…DWVLCRIYKK (149 aa).

As to quaternary structure, dimer. Interacts with RHA2A, RHA2B or RHG1A, but not with RHA3A or RHA3B. In terms of tissue distribution, expressed in stems, flowers, cauline leaves and rosettes.

It localises to the nucleus. In terms of biological role, transcription factors that bind specifically to the 5'-CATGTG-3' motif. The polypeptide is NAC domain-containing protein 19 (NAC019) (Arabidopsis thaliana (Mouse-ear cress)).